A 267-amino-acid chain; its full sequence is tRNA pseudouridine synthase A (267 aa).

Catalysis depends on D51, which acts as the Nucleophile. Y109 contributes to the substrate binding site.

It belongs to the tRNA pseudouridine synthase TruA family. As to quaternary structure, homodimer.

It carries out the reaction uridine(38/39/40) in tRNA = pseudouridine(38/39/40) in tRNA. In terms of biological role, formation of pseudouridine at positions 38, 39 and 40 in the anticodon stem and loop of transfer RNAs. The chain is tRNA pseudouridine synthase A from Staphylococcus aureus (strain bovine RF122 / ET3-1).